Reading from the N-terminus, the 91-residue chain is Small ribosomal subunit protein uS19 (91 aa).

It belongs to the universal ribosomal protein uS19 family.

Its function is as follows. Protein S19 forms a complex with S13 that binds strongly to the 16S ribosomal RNA. This Psychrobacter sp. (strain PRwf-1) protein is Small ribosomal subunit protein uS19.